The chain runs to 571 residues: Peptide-N4-(N-acetyl-beta-glucosaminyl)asparagine amidase A (571 aa).

Residues N121, N143, N197, N241, N318, N367, N390, N423, N457, N481, N524, and N529 are each glycosylated (N-linked (GlcNAc...) asparagine).

In terms of assembly, heterodimer of a large and a small chain. In terms of processing, is highly glycosylated and is largly resistant against self-deglycosylation.

It carries out the reaction Hydrolysis of an N(4)-(acetyl-beta-D-glucosaminyl)asparagine residue in which the glucosamine residue may be further glycosylated, to yield a (substituted) N-acetyl-beta-D-glucosaminylamine and a peptide containing an aspartate residue.. The chain is Peptide-N4-(N-acetyl-beta-glucosaminyl)asparagine amidase A from Prunus dulcis (Almond).